Here is a 139-residue protein sequence, read N- to C-terminus: ATP synthase epsilon chain (139 aa).

The protein belongs to the ATPase epsilon chain family. As to quaternary structure, F-type ATPases have 2 components, CF(1) - the catalytic core - and CF(0) - the membrane proton channel. CF(1) has five subunits: alpha(3), beta(3), gamma(1), delta(1), epsilon(1). CF(0) has three main subunits: a, b and c.

The protein resides in the cell inner membrane. Functionally, produces ATP from ADP in the presence of a proton gradient across the membrane. In Pseudomonas entomophila (strain L48), this protein is ATP synthase epsilon chain.